Reading from the N-terminus, the 101-residue chain is Interleukin-8 (101 aa).

Positions 1 to 22 are cleaved as a signal peptide; it reads MTSKLAVALLAAFLLSAALCEA. Intrachain disulfides connect C34–C61 and C36–C77.

The protein belongs to the intercrine alpha (chemokine CxC) family. Homodimer. Interacts with TNFAIP6 (via Link domain); this interaction interferes with chemokine binding to glycosaminoglycans.

The protein resides in the secreted. In terms of biological role, chemotactic factor that mediates inflammatory response by attracting neutrophils, basophils, and T-cells to clear pathogens and protect the host from infection. Also plays an important role in neutrophil activation. Released in response to an inflammatory stimulus, exerts its effect by binding to the G-protein-coupled receptors CXCR1 and CXCR2, primarily found in neutrophils, monocytes and endothelial cells. G-protein heterotrimer (alpha, beta, gamma subunits) constitutively binds to CXCR1/CXCR2 receptor and activation by IL8 leads to beta and gamma subunits release from Galpha (GNAI2 in neutrophils) and activation of several downstream signaling pathways including PI3K and MAPK pathways. This Bos taurus (Bovine) protein is Interleukin-8 (CXCL8).